A 1041-amino-acid polypeptide reads, in one-letter code: Nuclear migration protein unc-83 (1041 aa).

3 disordered regions span residues 258–283 (VGHL…TETV), 453–498 (IHGQ…LEDD), and 613–646 (IRNR…DSIS). Positions 456 to 465 (QKKPLRRASR) are enriched in basic residues. Positions 613-626 (IRNRDSDTAPEHSD) are enriched in basic and acidic residues. Coiled-coil stretches lie at residues 785–816 (RSKE…DLLA) and 931–951 (KAEL…FNDM). Positions 986-1041 (TENEPLTIAEAISSSRLIKFTFALSLLAALAAIFYYHVFGKPFGPHVTYVNGPPPV) constitute a KASH domain. A helical; Anchor for type IV membrane protein transmembrane segment spans residues 1005–1024 (FTFALSLLAALAAIFYYHVF).

As to quaternary structure, component of the unc-83-unc-84 LINC complex which contains at least unc-83 and unc-84. Within the unc-83-unc-84 LINC complex interacts with unc-84 (via C-terminus); the interaction is probably required to recruit unc-83 to the nuclear envelope where it then recruits dynein and kinesin-1 complexes to regulate nuclear migration. Interacts with bicd-1 and dlc-1. Interacts with nud-2 (via C-terminus); the interaction is direct, and is required for recruitment of nud-2 to the nuclear envelope. Interacts with klc-2; the interaction is direct. In terms of tissue distribution, predominantly expressed in migratory nuclei. Expressed in a variety of cell-types, including cells around the pharynx and in the uterus.

The protein localises to the nucleus membrane. The protein resides in the nucleus outer membrane. Cargo-specific adapter that is involved in nuclear migration during development and thereafter. Component of the unc-83-unc-84 LINC (LInker of Nucleoskeleton and Cytoskeleton) complex where it interacts with unc-84 to form a bridge connecting the nuclear envelope to the cytoskeleton which allows for nuclear transport along microtubules. Within the complex, connects the nuclear envelope to the microtubule cytoskeleton through the kinesin-1 light chain protein klc-2 (most likely within the Kinesin 1 motor complex) to regulate nuclear migrations. Moreover, within the complex, also recruits the large microtubule-associated bicd-1-dlc-1-egal-1 and lis-1-nud-2 complexes to the nuclear envelope to regulate both the bidirectional migration of nuclei and the extent of nuclear migrations. Not required for centrosome attachment to the nucleus. This is Nuclear migration protein unc-83 from Caenorhabditis elegans.